The sequence spans 427 residues: 3-phosphoshikimate 1-carboxyvinyltransferase (427 aa).

3-phosphoshikimate is bound by residues Lys20, Ser21, and Arg25. Lys20 is a phosphoenolpyruvate binding site. Phosphoenolpyruvate contacts are provided by Gly92 and Arg120. 3-phosphoshikimate-binding residues include Ser166, Gln168, Asp312, and Lys339. A phosphoenolpyruvate-binding site is contributed by Gln168. Asp312 functions as the Proton acceptor in the catalytic mechanism. Positions 343 and 385 each coordinate phosphoenolpyruvate.

The protein belongs to the EPSP synthase family. As to quaternary structure, monomer.

The protein resides in the cytoplasm. The catalysed reaction is 3-phosphoshikimate + phosphoenolpyruvate = 5-O-(1-carboxyvinyl)-3-phosphoshikimate + phosphate. The protein operates within metabolic intermediate biosynthesis; chorismate biosynthesis; chorismate from D-erythrose 4-phosphate and phosphoenolpyruvate: step 6/7. Catalyzes the transfer of the enolpyruvyl moiety of phosphoenolpyruvate (PEP) to the 5-hydroxyl of shikimate-3-phosphate (S3P) to produce enolpyruvyl shikimate-3-phosphate and inorganic phosphate. The protein is 3-phosphoshikimate 1-carboxyvinyltransferase of Streptococcus thermophilus (strain ATCC BAA-491 / LMD-9).